The sequence spans 899 residues: Auxin response factor 25 (899 aa).

Residues 1 to 20 (MKLSPPASADMPQALPENDG) form a disordered region. Positions 132-234 (FCKTLTASDT…QLLLGIRRAN (103 aa)) form a DNA-binding region, TF-B3. Positions 546–564 (RQHVLQEQSSQEMQQQLPS) are enriched in low complexity. Residues 546 to 586 (RQHVLQEQSSQEMQQQLPSSDHHVADVASESGSAPQAQSSL) are disordered. Polar residues predominate over residues 575–586 (ESGSAPQAQSSL). The PB1 domain maps to 766-850 (ATFVKVYKSG…WCIKILSPQE (85 aa)).

This sequence belongs to the ARF family. As to quaternary structure, homodimers and heterodimers. In terms of tissue distribution, expressed in roots, culms, leaves and young panicles.

It localises to the nucleus. Functionally, auxin response factors (ARFs) are transcriptional factors that bind specifically to the DNA sequence 5'-TGTCTC-3' found in the auxin-responsive promoter elements (AuxREs). This is Auxin response factor 25 (ARF25) from Oryza sativa subsp. japonica (Rice).